Consider the following 37-residue polypeptide: Large ribosomal subunit protein bL36 (37 aa).

It belongs to the bacterial ribosomal protein bL36 family.

In Azoarcus sp. (strain BH72), this protein is Large ribosomal subunit protein bL36.